We begin with the raw amino-acid sequence, 142 residues long: Hemoglobin subunit alpha (142 aa).

In terms of domain architecture, Globin spans 2–142; it reads VLSPADKTNI…VSTVLTSKYR (141 aa). S4 is subject to Phosphoserine. N6-succinyllysine is present on K8. T9 carries the post-translational modification Phosphothreonine. K12 is modified (N6-succinyllysine). K17 carries the N6-acetyllysine; alternate modification. K17 carries the N6-succinyllysine; alternate modification. Y25 is subject to Phosphotyrosine. At S36 the chain carries Phosphoserine. K41 carries the post-translational modification N6-succinyllysine. Residue S50 is modified to Phosphoserine. Residue H59 coordinates O2. Residue H88 coordinates heme b. Position 103 is a phosphoserine (S103). T109 is modified (phosphothreonine). S125 bears the Phosphoserine mark. Phosphothreonine occurs at positions 135 and 138. S139 carries the phosphoserine modification.

This sequence belongs to the globin family. Heterotetramer of two alpha chains and two beta chains. Red blood cells.

In terms of biological role, involved in oxygen transport from the lung to the various peripheral tissues. Its function is as follows. Hemopressin acts as an antagonist peptide of the cannabinoid receptor CNR1. Hemopressin-binding efficiently blocks cannabinoid receptor CNR1 and subsequent signaling. The protein is Hemoglobin subunit alpha (HBA) of Canis latrans (Coyote).